A 394-amino-acid polypeptide reads, in one-letter code: p-hydroxybenzoate hydroxylase (394 aa).

FAD is bound by residues S13, E32, 42 to 47 (RIRAGV), and Q102. Substrate is bound by residues Y201, 212-214 (SQR), and Y222. An FAD-binding site is contributed by D286. Substrate is bound at residue P293. 299-300 (LN) lines the FAD pocket.

This sequence belongs to the aromatic-ring hydroxylase family. As to quaternary structure, homodimer. The cofactor is FAD.

The catalysed reaction is 4-hydroxybenzoate + NADPH + O2 + H(+) = 3,4-dihydroxybenzoate + NADP(+) + H2O. It participates in aromatic compound metabolism; benzoate degradation via hydroxylation; 3,4-dihydroxybenzoate from benzoate: step 2/2. Its function is as follows. Catalyzes the incorporation of an atom of dioxygen into p-hydroxybenzoate (p-OHB) to form 3,4-dihydroxybenzoate (3,4DOHB). The reaction occurs in two parts: reduction of the flavin adenine dinucleotide (FAD) in the enzyme by reduced nicotinamide adenine dinucleotide phosphate (NADPH) in response to binding p-hydroxybenzoate to the enzyme and oxidation of reduced FAD with oxygen to form a hydroperoxide, which then oxygenates p-hydroxybenzoate. The protein is p-hydroxybenzoate hydroxylase of Pseudomonas aeruginosa (strain ATCC 15692 / DSM 22644 / CIP 104116 / JCM 14847 / LMG 12228 / 1C / PRS 101 / PAO1).